Here is a 938-residue protein sequence, read N- to C-terminus: Respiratory burst oxidase homolog protein C (938 aa).

The segment at 1–63 (MQNSENHHPH…DIGTSAGAGA (63 aa)) is disordered. Residues 1-369 (MQNSENHHPH…MYFLLDNWQR (369 aa)) lie on the Cytoplasmic side of the membrane. A coiled-coil region spans residues 115–141 (ASLVRNASSRIRQVSQELKRLASLNKR). EF-hand-like stretches follow at residues 185 to 195 (TAPTTGLLPRA) and 222 to 233 (RNITTDSINKAQ). 2 consecutive EF-hand domains span residues 245–280 (SFDT…SASA) and 289–324 (QSDE…APNQ). D258, D260, D262, R264, and E269 together coordinate Ca(2+). A helical membrane pass occupies residues 370–390 (VWVLLLWIGIMAVLFTWKYIQ). Topologically, residues 391-402 (YKQKAAYDVMGP) are extracellular. A helical membrane pass occupies residues 403–423 (CVCLAKGAAETIKLNMAIILL). The region spanning 408–565 (KGAAETIKLN…LFIIVYTLLI (158 aa)) is the Ferric oxidoreductase domain. At 424 to 454 (PVCRNTITWLRNKTRLGSAVPFDDNLNFHKV) the chain is on the cytoplasmic side. Residues 455 to 475 (IAVAIALGVAIHGLAHLTCDF) form a helical membrane-spanning segment. At 476-509 (PKLLNASEEAYEPMIYYFGEQPESYWWFVRGVEG) the chain is on the extracellular side. Residues 510–530 (VTGIIMVVLMAIAFTLATPWF) form a helical membrane-spanning segment. Topologically, residues 531-545 (RRGRVSFPKPFHKLT) are cytoplasmic. The chain crosses the membrane as a helical span at residues 546–566 (GFNAFWYSHHLFIIVYTLLIV). At 567–580 (HGEKLYITKDWYKR) the chain is on the extracellular side. Residues 581-599 (STWMYLTVPLVLYAGERLL) form a helical membrane-spanning segment. The FAD-binding FR-type domain maps to 599–727 (LRAFRSSIKA…DGPYGAPAQD (129 aa)). The Cytoplasmic segment spans residues 600-732 (RAFRSSIKAV…APAQDYKQYE (133 aa)). The helical transmembrane segment at 733 to 753 (VVLLVGLGIGATPMISIVKDI) threads the bilayer. At 754–938 (VNNMKAMDEE…TKFDFHKENF (185 aa)) the chain is on the extracellular side. The segment at 762 to 796 (EEENSLENGNGMSNAAQNASPNMAQKRGKSSSASG) is disordered. Positions 767 to 784 (LENGNGMSNAAQNASPNM) are enriched in polar residues.

Belongs to the RBOH (TC 5.B.1.3) family. In terms of assembly, monomer and homodimer. Phosphorylated by CPK. In terms of tissue distribution, expressed in leaves.

The protein resides in the membrane. Its function is as follows. Calcium-dependent NADPH oxidase that generates superoxide. May be responsible for the oxidative burst in response to pathogen attack in the leaves. This is Respiratory burst oxidase homolog protein C (RBOHC) from Solanum tuberosum (Potato).